A 241-amino-acid chain; its full sequence is Probable transcriptional regulatory protein Daro_4067 (241 aa).

The tract at residues 1–22 is disordered; that stretch reads MAGHSKWANIQHRKGRQDEKRG.

Belongs to the TACO1 family.

The protein localises to the cytoplasm. The sequence is that of Probable transcriptional regulatory protein Daro_4067 from Dechloromonas aromatica (strain RCB).